The following is a 406-amino-acid chain: Phosphorylase b kinase gamma catalytic chain, liver/testis isoform (406 aa).

Residues 24-291 enclose the Protein kinase domain; the sequence is YDPKDIIGRG…AEQALQHPFF (268 aa). ATP is bound by residues 30–38 and K53; that span reads IGRGVSSVV. D153 serves as the catalytic Proton acceptor. Residues 306–330 form a calmodulin-binding (domain-N) region; sequence QRFRVAVWTILAAGRVALSSHRLRP. Residues 346 to 370 form a calmodulin-binding (domain-C) region; sequence VRRLIDNCAFRLYGHWVKKGEQQNR.

It belongs to the protein kinase superfamily. CAMK Ser/Thr protein kinase family. In terms of assembly, hexadecamer of 4 heterotetramers, each composed of alpha, beta, gamma, and delta subunits. Alpha (PHKA1 or PHKA2) and beta (PHKB) are regulatory subunits, gamma (PHKG1 or PHKG2) is the catalytic subunit, and delta is calmodulin.

The enzyme catalyses 2 ATP + phosphorylase b = 2 ADP + phosphorylase a.. In terms of biological role, catalytic subunit of the phosphorylase b kinase (PHK), which mediates the neural and hormonal regulation of glycogen breakdown (glycogenolysis) by phosphorylating and thereby activating glycogen phosphorylase. May regulate glycogeneolysis in the testis. In vitro, phosphorylates PYGM. This is Phosphorylase b kinase gamma catalytic chain, liver/testis isoform (Phkg2) from Rattus norvegicus (Rat).